Reading from the N-terminus, the 62-residue chain is Conotoxin reg3.5 (62 aa).

An N-terminal signal peptide occupies residues 1 to 22; sequence MMFKLGVLLTICLLLFPLTGTA. Residues 23-49 constitute a propeptide that is removed on maturation; that stretch reads LDGDQLAEHMLDISSGINDRWFDPVRK. Intrachain disulfides connect C50/C60, C51/C58, and C56/C61.

The protein belongs to the conotoxin M superfamily. Expressed by the venom duct.

It is found in the secreted. The protein is Conotoxin reg3.5 of Conus regius (Crown cone).